The sequence spans 299 residues: CMRF35-like molecule 8 (299 aa).

An N-terminal signal peptide occupies residues 1–17; it reads MWLPWALLLLWVPGCFA. Topologically, residues 18 to 180 are extracellular; it reads LSKCRTVAGP…TEEVVNSQLP (163 aa). Residues 19-123 form the Ig-like V-type domain; it reads SKCRTVAGPV…HDPVVEVEVS (105 aa). The cysteines at positions 36 and 103 are disulfide-linked. N-linked (GlcNAc...) asparagine glycosylation is found at N83 and N92. Residues 181–201 traverse the membrane as a helical segment; the sequence is LLLSLLALLLLLLVGASLLAW. The Cytoplasmic portion of the chain corresponds to 202–299; sequence RMFQKWIKAG…DSDYSVIRKT (98 aa). Positions 278 to 299 are disordered; the sequence is RIAAQRPREEEPDSDYSVIRKT. Y293 carries the phosphotyrosine modification.

This sequence belongs to the CD300 family. As to quaternary structure, upon tyrosine-phosphorylation, interacts with PTN6/SHP-1 and PTPN11/SHP-2 and INPP5D. Phosphorylated on tyrosine. Post-translationally, N-glycosylated. In terms of tissue distribution, expressed not only by natural killer (NK) cells but also by T-cell subsets, B-cells, dendritic cells, mast cells, granulocytes and monocytes.

It is found in the cell membrane. Its function is as follows. Inhibitory receptor which may contribute to the down-regulation of cytolytic activity in natural killer (NK) cells, and to the down-regulation of mast cell degranulation. Negatively regulates the Toll-like receptor (TLR) signaling mediated by MYD88 but not TRIF through activation of PTPN6. The protein is CMRF35-like molecule 8 (CD300A) of Homo sapiens (Human).